The chain runs to 157 residues: 2-C-methyl-D-erythritol 2,4-cyclodiphosphate synthase (157 aa).

The a divalent metal cation site is built by Asp-8 and His-10. 4-CDP-2-C-methyl-D-erythritol 2-phosphate-binding positions include 8–10 (DVH) and 34–35 (HS). His-42 lines the a divalent metal cation pocket. Residues 56–58 (DIG), 61–65 (FPDTD), 132–135 (TTTE), Phe-139, and Arg-142 each bind 4-CDP-2-C-methyl-D-erythritol 2-phosphate.

It belongs to the IspF family. Homotrimer. A divalent metal cation serves as cofactor.

It catalyses the reaction 4-CDP-2-C-methyl-D-erythritol 2-phosphate = 2-C-methyl-D-erythritol 2,4-cyclic diphosphate + CMP. It participates in isoprenoid biosynthesis; isopentenyl diphosphate biosynthesis via DXP pathway; isopentenyl diphosphate from 1-deoxy-D-xylulose 5-phosphate: step 4/6. Functionally, involved in the biosynthesis of isopentenyl diphosphate (IPP) and dimethylallyl diphosphate (DMAPP), two major building blocks of isoprenoid compounds. Catalyzes the conversion of 4-diphosphocytidyl-2-C-methyl-D-erythritol 2-phosphate (CDP-ME2P) to 2-C-methyl-D-erythritol 2,4-cyclodiphosphate (ME-CPP) with a corresponding release of cytidine 5-monophosphate (CMP). This is 2-C-methyl-D-erythritol 2,4-cyclodiphosphate synthase from Geotalea uraniireducens (strain Rf4) (Geobacter uraniireducens).